Consider the following 302-residue polypeptide: Bifunctional protein FolD (302 aa).

Residues 165 to 167, Ser-190, and Ile-231 contribute to the NADP(+) site; that span reads GRS.

Belongs to the tetrahydrofolate dehydrogenase/cyclohydrolase family. As to quaternary structure, homodimer.

It carries out the reaction (6R)-5,10-methylene-5,6,7,8-tetrahydrofolate + NADP(+) = (6R)-5,10-methenyltetrahydrofolate + NADPH. The enzyme catalyses (6R)-5,10-methenyltetrahydrofolate + H2O = (6R)-10-formyltetrahydrofolate + H(+). Its pathway is one-carbon metabolism; tetrahydrofolate interconversion. Functionally, catalyzes the oxidation of 5,10-methylenetetrahydrofolate to 5,10-methenyltetrahydrofolate and then the hydrolysis of 5,10-methenyltetrahydrofolate to 10-formyltetrahydrofolate. This Prochlorococcus marinus (strain SARG / CCMP1375 / SS120) protein is Bifunctional protein FolD.